Reading from the N-terminus, the 319-residue chain is tRNA uridine(34) hydroxylase (319 aa).

The Rhodanese domain occupies 133–231; sequence EDPDSVVIDT…YLEDVSSENS (99 aa). The active-site Cysteine persulfide intermediate is the Cys191.

This sequence belongs to the TrhO family.

It catalyses the reaction uridine(34) in tRNA + AH2 + O2 = 5-hydroxyuridine(34) in tRNA + A + H2O. Functionally, catalyzes oxygen-dependent 5-hydroxyuridine (ho5U) modification at position 34 in tRNAs. This Prochlorococcus marinus (strain NATL1A) protein is tRNA uridine(34) hydroxylase.